The primary structure comprises 100 residues: NADH-quinone oxidoreductase subunit K 1 (100 aa).

3 helical membrane-spanning segments follow: residues Leu-4–Val-24, Ile-29–Leu-49, and Ile-60–Met-80.

Belongs to the complex I subunit 4L family. As to quaternary structure, NDH-1 is composed of 14 different subunits. Subunits NuoA, H, J, K, L, M, N constitute the membrane sector of the complex.

The protein resides in the cell inner membrane. It carries out the reaction a quinone + NADH + 5 H(+)(in) = a quinol + NAD(+) + 4 H(+)(out). Its function is as follows. NDH-1 shuttles electrons from NADH, via FMN and iron-sulfur (Fe-S) centers, to quinones in the respiratory chain. The immediate electron acceptor for the enzyme in this species is believed to be ubiquinone. Couples the redox reaction to proton translocation (for every two electrons transferred, four hydrogen ions are translocated across the cytoplasmic membrane), and thus conserves the redox energy in a proton gradient. This Geobacter sulfurreducens (strain ATCC 51573 / DSM 12127 / PCA) protein is NADH-quinone oxidoreductase subunit K 1.